We begin with the raw amino-acid sequence, 240 residues long: Ribonuclease HII (240 aa).

In terms of domain architecture, RNase H type-2 spans 21-210 (GLVAGVDEAG…VAAAVQRTVV (190 aa)). Residues Asp-27, Glu-28, and Asp-119 each coordinate a divalent metal cation.

It belongs to the RNase HII family. It depends on Mn(2+) as a cofactor. Mg(2+) serves as cofactor.

It localises to the cytoplasm. The enzyme catalyses Endonucleolytic cleavage to 5'-phosphomonoester.. Its function is as follows. Endonuclease that specifically degrades the RNA of RNA-DNA hybrids. This chain is Ribonuclease HII, found in Paracidovorax citrulli (strain AAC00-1) (Acidovorax citrulli).